A 101-amino-acid polypeptide reads, in one-letter code: Aspartyl/glutamyl-tRNA(Asn/Gln) amidotransferase subunit C (101 aa).

It belongs to the GatC family. As to quaternary structure, heterotrimer of A, B and C subunits.

The catalysed reaction is L-glutamyl-tRNA(Gln) + L-glutamine + ATP + H2O = L-glutaminyl-tRNA(Gln) + L-glutamate + ADP + phosphate + H(+). The enzyme catalyses L-aspartyl-tRNA(Asn) + L-glutamine + ATP + H2O = L-asparaginyl-tRNA(Asn) + L-glutamate + ADP + phosphate + 2 H(+). Functionally, allows the formation of correctly charged Asn-tRNA(Asn) or Gln-tRNA(Gln) through the transamidation of misacylated Asp-tRNA(Asn) or Glu-tRNA(Gln) in organisms which lack either or both of asparaginyl-tRNA or glutaminyl-tRNA synthetases. The reaction takes place in the presence of glutamine and ATP through an activated phospho-Asp-tRNA(Asn) or phospho-Glu-tRNA(Gln). The chain is Aspartyl/glutamyl-tRNA(Asn/Gln) amidotransferase subunit C from Enterococcus faecalis (strain ATCC 700802 / V583).